Consider the following 48-residue polypeptide: Omega-agatoxin-Aa5a (48 aa).

Disulfide bonds link cysteine 3/cysteine 16, cysteine 10/cysteine 21, cysteine 15/cysteine 32, and cysteine 23/cysteine 30.

The protein belongs to the neurotoxin 02 (plectoxin) family. In terms of tissue distribution, expressed by the venom gland.

The protein resides in the secreted. Functionally, the toxin blocks voltage-gated calcium channels in rat cerebellar granule cells (IC(50)=200 nM). The polypeptide is Omega-agatoxin-Aa5a (Agelenopsis aperta (North American funnel-web spider)).